The primary structure comprises 320 residues: tRNA pseudouridine synthase B (320 aa).

Catalysis depends on D48, which acts as the Nucleophile.

Belongs to the pseudouridine synthase TruB family. Type 1 subfamily.

The enzyme catalyses uridine(55) in tRNA = pseudouridine(55) in tRNA. In terms of biological role, responsible for synthesis of pseudouridine from uracil-55 in the psi GC loop of transfer RNAs. The protein is tRNA pseudouridine synthase B of Mycobacterium leprae (strain TN).